The primary structure comprises 269 residues: uncharacterized protein (269 aa).

The ompR/PhoB-type DNA-binding region spans Trp-3–Asn-105.

It to V.cholerae cholera toxin transcriptional activator (ToxR).

This is an uncharacterized protein from Escherichia coli (strain K12).